A 230-amino-acid chain; its full sequence is Ion-translocating oxidoreductase complex subunit E (230 aa).

The next 5 helical transmembrane spans lie at 39–59 (LGLG…VSLV), 69–89 (IPVF…LMNA), 93–113 (GLYL…IIIG), 124–144 (VLPA…VLVV), and 182–202 (AFLL…LIAA).

It belongs to the NqrDE/RnfAE family. As to quaternary structure, the complex is composed of six subunits: RnfA, RnfB, RnfC, RnfD, RnfE and RnfG.

The protein resides in the cell inner membrane. Functionally, part of a membrane-bound complex that couples electron transfer with translocation of ions across the membrane. This Vibrio cholerae serotype O1 (strain ATCC 39315 / El Tor Inaba N16961) protein is Ion-translocating oxidoreductase complex subunit E.